The sequence spans 572 residues: Urease subunit alpha (572 aa).

Residues H139, H141, and K222 each contribute to the Ni(2+) site. At K222 the chain carries N6-carboxylysine. H224 is a substrate binding site. 2 residues coordinate Ni(2+): H251 and H277. Catalysis depends on H325, which acts as the Proton donor. D365 lines the Ni(2+) pocket.

The protein belongs to the metallo-dependent hydrolases superfamily. Urease alpha subunit family. As to quaternary structure, heterotrimer of UreA (gamma), UreB (beta) and UreC (alpha) subunits. Three heterotrimers associate to form the active enzyme. Requires Ni cation as cofactor. In terms of processing, carboxylation allows a single lysine to coordinate two nickel ions.

It is found in the cytoplasm. The enzyme catalyses urea + 2 H2O + H(+) = hydrogencarbonate + 2 NH4(+). The protein operates within nitrogen metabolism; urea degradation; CO(2) and NH(3) from urea (urease route): step 1/1. In Acetivibrio thermocellus (strain ATCC 27405 / DSM 1237 / JCM 9322 / NBRC 103400 / NCIMB 10682 / NRRL B-4536 / VPI 7372) (Clostridium thermocellum), this protein is Urease subunit alpha.